Reading from the N-terminus, the 1872-residue chain is Fatty acid synthase beta subunit pkiC (1872 aa).

The interval 174 to 425 is acetyltransferase (AT) domain; sequence VFGGQGECSR…DQSRIPFRDR (252 aa). The tract at residues 591–836 is enoyl reductase (ER) domain; sequence NRVLGAPPIM…IIAATPGVSD (246 aa). The disordered stretch occupies residues 1111 to 1132; that stretch reads TTPASWSTLSLTERDTSEETSD. Residues 1158–1597 form a dehydratase (DH) domain region; it reads PSHPLWMRAL…MPLEKLVVEI (440 aa). Residues 1518 to 1617 enclose the MaoC-like domain; sequence PPSNEPYAQL…CFSILAKRKE (100 aa).

The protein belongs to the fungal fatty acid synthetase subunit beta family. As to quaternary structure, [Alpha(6)beta(6)] hexamers of two multifunctional subunits (alpha and beta).

The enzyme catalyses acetyl-CoA + n malonyl-CoA + 2n NADPH + 4n H(+) = a long-chain-acyl-CoA + n CoA + n CO2 + 2n NADP(+).. It carries out the reaction holo-[ACP] + acetyl-CoA = acetyl-[ACP] + CoA. The catalysed reaction is holo-[ACP] + malonyl-CoA = malonyl-[ACP] + CoA. It catalyses the reaction a (3R)-hydroxyacyl-[ACP] = a (2E)-enoyl-[ACP] + H2O. The enzyme catalyses a 2,3-saturated acyl-[ACP] + NAD(+) = a (2E)-enoyl-[ACP] + NADH + H(+). It carries out the reaction (9Z)-octadecenoyl-[ACP] + H2O = (9Z)-octadecenoate + holo-[ACP] + H(+). The protein operates within secondary metabolite biosynthesis. Its function is as follows. Fatty acid synthase beta subunit; part of the pki gene cluster that mediates the biosynthesis of 2,4-dihydroxy-3-methyl-6-(2-oxoundecyl)benzaldehyde. The first step in the pathway is the generation of the decanoyl starter unit by the FAS composed of subunits pkiB and pkiC, which is then transferred directly from the FAS to the SAT domain of the non-reducing polyketide synthase pkiA. PkiA condenses the decanoyyl starter unit with 4 malonyl-CoA units and performs one methylation step to yield 2,4-dihydroxy-3-methyl-6-(2-oxoundecyl)benzaldehyde. The sequence is that of Fatty acid synthase beta subunit pkiC from Emericella nidulans (strain FGSC A4 / ATCC 38163 / CBS 112.46 / NRRL 194 / M139) (Aspergillus nidulans).